A 185-amino-acid chain; its full sequence is Ribosome-recycling factor (185 aa).

This sequence belongs to the RRF family.

Its subcellular location is the cytoplasm. Responsible for the release of ribosomes from messenger RNA at the termination of protein biosynthesis. May increase the efficiency of translation by recycling ribosomes from one round of translation to another. The chain is Ribosome-recycling factor from Myxococcus xanthus (strain DK1622).